Consider the following 238-residue polypeptide: Ribonuclease PH (238 aa).

Residues R86 and 124 to 126 (GTR) contribute to the phosphate site.

The protein belongs to the RNase PH family. As to quaternary structure, homohexameric ring arranged as a trimer of dimers.

It carries out the reaction tRNA(n+1) + phosphate = tRNA(n) + a ribonucleoside 5'-diphosphate. Phosphorolytic 3'-5' exoribonuclease that plays an important role in tRNA 3'-end maturation. Removes nucleotide residues following the 3'-CCA terminus of tRNAs; can also add nucleotides to the ends of RNA molecules by using nucleoside diphosphates as substrates, but this may not be physiologically important. Probably plays a role in initiation of 16S rRNA degradation (leading to ribosome degradation) during starvation. The sequence is that of Ribonuclease PH from Geobacter metallireducens (strain ATCC 53774 / DSM 7210 / GS-15).